The primary structure comprises 165 residues: Nucleotide-binding protein Cagg_1607 (165 aa).

Belongs to the YajQ family.

In terms of biological role, nucleotide-binding protein. The protein is Nucleotide-binding protein Cagg_1607 of Chloroflexus aggregans (strain MD-66 / DSM 9485).